We begin with the raw amino-acid sequence, 338 residues long: Lipoate-protein ligase A (338 aa).

Positions Pro29 to Val216 constitute a BPL/LPL catalytic domain. ATP contacts are provided by residues Arg71, Gly76–Phe79, and Lys134. Lys134 contacts (R)-lipoate.

The protein belongs to the LplA family. As to quaternary structure, monomer.

The protein localises to the cytoplasm. It catalyses the reaction L-lysyl-[lipoyl-carrier protein] + (R)-lipoate + ATP = N(6)-[(R)-lipoyl]-L-lysyl-[lipoyl-carrier protein] + AMP + diphosphate + H(+). It participates in protein modification; protein lipoylation via exogenous pathway; protein N(6)-(lipoyl)lysine from lipoate: step 1/2. It functions in the pathway protein modification; protein lipoylation via exogenous pathway; protein N(6)-(lipoyl)lysine from lipoate: step 2/2. In terms of biological role, catalyzes both the ATP-dependent activation of exogenously supplied lipoate to lipoyl-AMP and the transfer of the activated lipoyl onto the lipoyl domains of lipoate-dependent enzymes. The sequence is that of Lipoate-protein ligase A from Salmonella schwarzengrund (strain CVM19633).